The sequence spans 166 residues: Putative peroxisomal peroxiredoxin (166 aa).

The 162-residue stretch at 5-166 (FPEDVKFLYI…SGVDAVLAAL (162 aa)) folds into the Thioredoxin domain. The Cysteine sulfenic acid (-SOH) intermediate role is filled by cysteine 56.

The protein belongs to the peroxiredoxin family. Prx5 subfamily. Homodimer; disulfide-linked, upon oxidation.

It carries out the reaction a hydroperoxide + [protein]-dithiol = [protein]-disulfide + an alcohol + H2O. Functionally, thiol-specific peroxidase that catalyzes the reduction of hydrogen peroxide and organic hydroperoxides to water and alcohols, respectively. Plays a role in cell protection against oxidative stress by detoxifying peroxides and as sensor of hydrogen peroxide-mediated signaling events. The sequence is that of Putative peroxisomal peroxiredoxin from Lipomyces kononenkoae (Yeast).